The primary structure comprises 480 residues: NADH-quinone oxidoreductase subunit N (480 aa).

13 consecutive transmembrane segments (helical) span residues 10–30 (FISI…ILIE), 40–60 (WSSL…WGGI), 80–100 (FFTV…TAFF), 117–137 (AVFG…FLGI), 166–186 (LMGS…YGAI), 208–228 (VLFF…AALV), 246–266 (TAFM…RLFF), 276–296 (WNQV…FVAL), 304–324 (FFAY…VIGN), 330–350 (ALTF…AVLA), 374–394 (LASL…TAGF), 409–431 (YYGL…LRII), and 452–472 (IVGT…APFL).

This sequence belongs to the complex I subunit 2 family. As to quaternary structure, NDH-1 is composed of 14 different subunits. Subunits NuoA, H, J, K, L, M, N constitute the membrane sector of the complex.

The protein localises to the cell inner membrane. It catalyses the reaction a quinone + NADH + 5 H(+)(in) = a quinol + NAD(+) + 4 H(+)(out). NDH-1 shuttles electrons from NADH, via FMN and iron-sulfur (Fe-S) centers, to quinones in the respiratory chain. The immediate electron acceptor for the enzyme in this species is believed to be ubiquinone. Couples the redox reaction to proton translocation (for every two electrons transferred, four hydrogen ions are translocated across the cytoplasmic membrane), and thus conserves the redox energy in a proton gradient. The polypeptide is NADH-quinone oxidoreductase subunit N (Protochlamydia amoebophila (strain UWE25)).